A 520-amino-acid polypeptide reads, in one-letter code: Beta-glucosidase 45 (520 aa).

An N-terminal signal peptide occupies residues 1–22; that stretch reads MKNLTSFVIVILLQSLLFHVYG. N-linked (GlcNAc...) asparagine glycosylation is present at Asn3. A beta-D-glucoside is bound by residues Gln52, His155, and 200–201; that span reads NE. Residue Glu201 is the Proton donor of the active site. Cysteines 220 and 227 form a disulfide. A glycan (N-linked (GlcNAc...) asparagine) is linked at Asn226. Residue Tyr344 participates in a beta-D-glucoside binding. Cys352 and Cys357 are joined by a disulfide. N-linked (GlcNAc...) asparagine glycosylation is present at Asn378. Glu417 is an a beta-D-glucoside binding site. Catalysis depends on Glu417, which acts as the Nucleophile. An N-linked (GlcNAc...) asparagine glycan is attached at Asn435. A beta-D-glucoside is bound by residues Trp466, 473 to 474, and Phe482; that span reads EW.

The protein belongs to the glycosyl hydrolase 1 family. In terms of tissue distribution, expressed in stems and siliques.

It catalyses the reaction Hydrolysis of terminal, non-reducing beta-D-glucosyl residues with release of beta-D-glucose.. Its function is as follows. Hydrolyzes p-nitrophenyl beta-D-glucoside and natural glucosides such as syringin, coniferin and p-coumaryl alcohol glucoside. May be involved in lignification by hydrolyzing monolignol glucosides. This chain is Beta-glucosidase 45, found in Arabidopsis thaliana (Mouse-ear cress).